Consider the following 639-residue polypeptide: Probable serine/threonine-protein kinase DDB_G0282777 (639 aa).

The stretch at 7–122 (LKENKESLKD…EDLKSIILTS (116 aa)) forms a coiled coil. The 356-residue stretch at 233 to 588 (MHMVGDIKKG…SNNNQNHTNI (356 aa)) folds into the Protein kinase domain. Residues 239-247 (IKKGSISSD) and Lys284 contribute to the ATP site. Asp439 functions as the Proton acceptor in the catalytic mechanism. Residues 601–639 (NTLETSTTNPNTNTTTSDTNTSTTSTTNTNTTTSNTITA) form a disordered region.

The protein belongs to the protein kinase superfamily. Ser/Thr protein kinase family.

The enzyme catalyses L-seryl-[protein] + ATP = O-phospho-L-seryl-[protein] + ADP + H(+). The catalysed reaction is L-threonyl-[protein] + ATP = O-phospho-L-threonyl-[protein] + ADP + H(+). The sequence is that of Probable serine/threonine-protein kinase DDB_G0282777 from Dictyostelium discoideum (Social amoeba).